The primary structure comprises 238 residues: Monocyte to macrophage differentiation factor (238 aa).

Over 1-28 (MRFRNRFQRFMNHRAPANGRYKPTCYEH) the chain is Cytoplasmic. Residues 29–49 (AANCYTHAFLIVPAIVGSALL) traverse the membrane as a helical segment. The Lumenal segment spans residues 50–61 (HRLSDDCWEKIT). Residues 62-82 (AWIYGMGLCALFIVSTVFHIV) traverse the membrane as a helical segment. The Cytoplasmic portion of the chain corresponds to 83–101 (SWKKSHLRTVEHCFHMCDR). The chain crosses the membrane as a helical span at residues 102–122 (MVIYFFIAASYAPWLNLRELG). A topological domain (lumenal) is located at residue Pro-123. Residues 124–144 (LASHMRWFIWLMAAGGTIYVF) form a helical membrane-spanning segment. The Cytoplasmic portion of the chain corresponds to 145–151 (LYHEKYK). Residues 152–172 (VVELFFYLTMGFSPALVVTSM) form a helical membrane-spanning segment. The Lumenal portion of the chain corresponds to 173–174 (NN). Residues 175–195 (TDGLQELACGGLIYCLGVVFF) traverse the membrane as a helical segment. The Cytoplasmic portion of the chain corresponds to 196–198 (KSD). Residues 199-219 (GIIPFAHAIWHLFVATAAAVH) traverse the membrane as a helical segment. Over 220 to 238 (YYAIWKYLYRSPTDFIRHL) the chain is Lumenal.

This sequence belongs to the ADIPOR family.

The protein resides in the late endosome membrane. It is found in the lysosome membrane. Involved in the dynamics of lysosomal membranes associated with microglial activation following brain lesion. The protein is Monocyte to macrophage differentiation factor of Mus musculus (Mouse).